A 580-amino-acid chain; its full sequence is 2-succinyl-5-enolpyruvyl-6-hydroxy-3-cyclohexene-1-carboxylate synthase (580 aa).

The protein belongs to the TPP enzyme family. MenD subfamily. Homodimer. Mg(2+) is required as a cofactor. The cofactor is Mn(2+). Thiamine diphosphate serves as cofactor.

The catalysed reaction is isochorismate + 2-oxoglutarate + H(+) = 5-enolpyruvoyl-6-hydroxy-2-succinyl-cyclohex-3-ene-1-carboxylate + CO2. It functions in the pathway quinol/quinone metabolism; 1,4-dihydroxy-2-naphthoate biosynthesis; 1,4-dihydroxy-2-naphthoate from chorismate: step 2/7. Its pathway is quinol/quinone metabolism; menaquinone biosynthesis. In terms of biological role, catalyzes the thiamine diphosphate-dependent decarboxylation of 2-oxoglutarate and the subsequent addition of the resulting succinic semialdehyde-thiamine pyrophosphate anion to isochorismate to yield 2-succinyl-5-enolpyruvyl-6-hydroxy-3-cyclohexene-1-carboxylate (SEPHCHC). The protein is 2-succinyl-5-enolpyruvyl-6-hydroxy-3-cyclohexene-1-carboxylate synthase of Bacillus pumilus (strain SAFR-032).